Here is a 181-residue protein sequence, read N- to C-terminus: ATP-dependent protease subunit HslV (181 aa).

The active site involves T11. A166, C169, and T172 together coordinate Na(+).

This sequence belongs to the peptidase T1B family. HslV subfamily. As to quaternary structure, a double ring-shaped homohexamer of HslV is capped on each side by a ring-shaped HslU homohexamer. The assembly of the HslU/HslV complex is dependent on binding of ATP.

Its subcellular location is the cytoplasm. It carries out the reaction ATP-dependent cleavage of peptide bonds with broad specificity.. With respect to regulation, allosterically activated by HslU binding. Its function is as follows. Protease subunit of a proteasome-like degradation complex believed to be a general protein degrading machinery. The sequence is that of ATP-dependent protease subunit HslV from Chlorobaculum tepidum (strain ATCC 49652 / DSM 12025 / NBRC 103806 / TLS) (Chlorobium tepidum).